Here is a 444-residue protein sequence, read N- to C-terminus: Phosphoglucosamine mutase (444 aa).

The active-site Phosphoserine intermediate is Ser102. The Mg(2+) site is built by Ser102, Asp241, Asp243, and Asp245. Ser102 carries the phosphoserine modification.

Belongs to the phosphohexose mutase family. Mg(2+) serves as cofactor. Activated by phosphorylation.

It catalyses the reaction alpha-D-glucosamine 1-phosphate = D-glucosamine 6-phosphate. In terms of biological role, catalyzes the conversion of glucosamine-6-phosphate to glucosamine-1-phosphate. This chain is Phosphoglucosamine mutase, found in Erwinia tasmaniensis (strain DSM 17950 / CFBP 7177 / CIP 109463 / NCPPB 4357 / Et1/99).